Reading from the N-terminus, the 345-residue chain is Phosphoribosylformylglycinamidine cyclo-ligase (345 aa).

This sequence belongs to the AIR synthase family.

The protein resides in the cytoplasm. The catalysed reaction is 2-formamido-N(1)-(5-O-phospho-beta-D-ribosyl)acetamidine + ATP = 5-amino-1-(5-phospho-beta-D-ribosyl)imidazole + ADP + phosphate + H(+). Its pathway is purine metabolism; IMP biosynthesis via de novo pathway; 5-amino-1-(5-phospho-D-ribosyl)imidazole from N(2)-formyl-N(1)-(5-phospho-D-ribosyl)glycinamide: step 2/2. The polypeptide is Phosphoribosylformylglycinamidine cyclo-ligase (Shewanella frigidimarina (strain NCIMB 400)).